Consider the following 517-residue polypeptide: Mitochondrial division protein fszA (517 aa).

GTP-binding positions include 60–64 (GGGCN), 147–149 (GTG), Glu-178, Arg-182, and Asp-225. The segment at 496–517 (FTNGNNNKPYNNNKNTPGSNYE) is disordered. Residues 497–517 (TNGNNNKPYNNNKNTPGSNYE) show a composition bias toward low complexity.

Belongs to the FtsZ family.

It is found in the mitochondrion matrix. Probably involved in mitochondrion division process. When overexpressed, induces mitochondrial tubule formation. Binds to and hydrolyzes GTP. This is Mitochondrial division protein fszA (fszA) from Dictyostelium discoideum (Social amoeba).